A 359-amino-acid chain; its full sequence is GTPase Obg (359 aa).

The Obg domain maps to 1–159; it reads MQFIDQAEIQ…RSLRLELKLL (159 aa). Residues 160-328 form the OBG-type G domain; sequence AEVGIIGLPN…LLHQIWQELE (169 aa). Residues 166–173, 191–195, 213–216, 280–283, and 309–311 each bind GTP; these read GLPNAGKS, FTTLV, DIPG, NKID, and SAI. Serine 173 and threonine 193 together coordinate Mg(2+).

Belongs to the TRAFAC class OBG-HflX-like GTPase superfamily. OBG GTPase family. Monomer. It depends on Mg(2+) as a cofactor.

It is found in the cytoplasm. Its function is as follows. An essential GTPase which binds GTP, GDP and possibly (p)ppGpp with moderate affinity, with high nucleotide exchange rates and a fairly low GTP hydrolysis rate. Plays a role in control of the cell cycle, stress response, ribosome biogenesis and in those bacteria that undergo differentiation, in morphogenesis control. The polypeptide is GTPase Obg (Cyanothece sp. (strain PCC 7425 / ATCC 29141)).